We begin with the raw amino-acid sequence, 104 residues long: Intracellular chorismate mutase (104 aa).

Positions A23–Y104 constitute a Chorismate mutase domain. Residues R59, V68, and E72 each contribute to the chorismate site.

Homodimer. Probably interacts with AroG (MSMEG_4244).

The protein localises to the cytoplasm. It carries out the reaction chorismate = prephenate. It participates in metabolic intermediate biosynthesis; prephenate biosynthesis; prephenate from chorismate: step 1/1. Its activity is regulated as follows. The formation of the complex with AroG activates the chorismate mutase activity. In terms of biological role, catalyzes the Claisen rearrangement of chorismate to prephenate. Probably involved in the aromatic amino acid biosynthesis. This Mycolicibacterium smegmatis (strain ATCC 700084 / mc(2)155) (Mycobacterium smegmatis) protein is Intracellular chorismate mutase.